The following is a 162-amino-acid chain: SsrA-binding protein (162 aa).

The protein belongs to the SmpB family.

Its subcellular location is the cytoplasm. Its function is as follows. Required for rescue of stalled ribosomes mediated by trans-translation. Binds to transfer-messenger RNA (tmRNA), required for stable association of tmRNA with ribosomes. tmRNA and SmpB together mimic tRNA shape, replacing the anticodon stem-loop with SmpB. tmRNA is encoded by the ssrA gene; the 2 termini fold to resemble tRNA(Ala) and it encodes a 'tag peptide', a short internal open reading frame. During trans-translation Ala-aminoacylated tmRNA acts like a tRNA, entering the A-site of stalled ribosomes, displacing the stalled mRNA. The ribosome then switches to translate the ORF on the tmRNA; the nascent peptide is terminated with the 'tag peptide' encoded by the tmRNA and targeted for degradation. The ribosome is freed to recommence translation, which seems to be the essential function of trans-translation. The polypeptide is SsrA-binding protein (Colwellia psychrerythraea (strain 34H / ATCC BAA-681) (Vibrio psychroerythus)).